The chain runs to 227 residues: Cytochrome c oxidase subunit 2 (227 aa).

Residues 1–14 (MAYPFQLGFQDAAS) are Mitochondrial intermembrane-facing. Residues 15 to 45 (PIMEELLHFHDHTLMIVFLISSLVLYIITLM) traverse the membrane as a helical segment. The Mitochondrial matrix portion of the chain corresponds to 46–59 (LTTKLTHTSTMDAQ). A helical transmembrane segment spans residues 60 to 87 (EVETVWTILPAIILILIALPSLRILYMM). Over 88-227 (DEVNNPSLTV…VFEKWSVSML (140 aa)) the chain is Mitochondrial intermembrane. 6 residues coordinate Cu cation: His161, Cys196, Glu198, Cys200, His204, and Met207. Glu198 serves as a coordination point for Mg(2+).

The protein belongs to the cytochrome c oxidase subunit 2 family. Component of the cytochrome c oxidase (complex IV, CIV), a multisubunit enzyme composed of 14 subunits. The complex is composed of a catalytic core of 3 subunits MT-CO1, MT-CO2 and MT-CO3, encoded in the mitochondrial DNA, and 11 supernumerary subunits COX4I, COX5A, COX5B, COX6A, COX6B, COX6C, COX7A, COX7B, COX7C, COX8 and NDUFA4, which are encoded in the nuclear genome. The complex exists as a monomer or a dimer and forms supercomplexes (SCs) in the inner mitochondrial membrane with NADH-ubiquinone oxidoreductase (complex I, CI) and ubiquinol-cytochrome c oxidoreductase (cytochrome b-c1 complex, complex III, CIII), resulting in different assemblies (supercomplex SCI(1)III(2)IV(1) and megacomplex MCI(2)III(2)IV(2)). Found in a complex with TMEM177, COA6, COX18, COX20, SCO1 and SCO2. Interacts with TMEM177 in a COX20-dependent manner. Interacts with COX20. Interacts with COX16. Cu cation serves as cofactor.

The protein localises to the mitochondrion inner membrane. It catalyses the reaction 4 Fe(II)-[cytochrome c] + O2 + 8 H(+)(in) = 4 Fe(III)-[cytochrome c] + 2 H2O + 4 H(+)(out). In terms of biological role, component of the cytochrome c oxidase, the last enzyme in the mitochondrial electron transport chain which drives oxidative phosphorylation. The respiratory chain contains 3 multisubunit complexes succinate dehydrogenase (complex II, CII), ubiquinol-cytochrome c oxidoreductase (cytochrome b-c1 complex, complex III, CIII) and cytochrome c oxidase (complex IV, CIV), that cooperate to transfer electrons derived from NADH and succinate to molecular oxygen, creating an electrochemical gradient over the inner membrane that drives transmembrane transport and the ATP synthase. Cytochrome c oxidase is the component of the respiratory chain that catalyzes the reduction of oxygen to water. Electrons originating from reduced cytochrome c in the intermembrane space (IMS) are transferred via the dinuclear copper A center (CU(A)) of subunit 2 and heme A of subunit 1 to the active site in subunit 1, a binuclear center (BNC) formed by heme A3 and copper B (CU(B)). The BNC reduces molecular oxygen to 2 water molecules using 4 electrons from cytochrome c in the IMS and 4 protons from the mitochondrial matrix. The polypeptide is Cytochrome c oxidase subunit 2 (MT-CO2) (Balaenoptera physalus (Fin whale)).